A 131-amino-acid polypeptide reads, in one-letter code: Small ribosomal subunit protein uS8 (131 aa).

The protein belongs to the universal ribosomal protein uS8 family. Part of the 30S ribosomal subunit. Contacts proteins S5 and S12.

One of the primary rRNA binding proteins, it binds directly to 16S rRNA central domain where it helps coordinate assembly of the platform of the 30S subunit. The polypeptide is Small ribosomal subunit protein uS8 (Dechloromonas aromatica (strain RCB)).